The sequence spans 802 residues: Neuronal PAS domain-containing protein 4 (802 aa).

The segment at 1–13 (MYRSTKGASKARR) is basic motif; degenerate. The bHLH domain occupies 1-53 (MYRSTKGASKARRDQINAEIRNLKELLPLAEADKVRLSYLHIMSLACIYTRKG). Residues 5-38 (TKGASKARRDQINAEIRNLKELLPLAEADKVRLS) adopt a coiled-coil conformation. Residues 14–53 (DQINAEIRNLKELLPLAEADKVRLSYLHIMSLACIYTRKG) form a helix-loop-helix motif region. 2 PAS domains span residues 70-144 (SAQE…LDAD) and 203-275 (PGPG…LAEN). The 40-residue stretch at 280–319 (AEMVVRLQAKHGGWTWIYCMLYSDGPEGPITANNYPISDT) folds into the PAC domain. Polar residues-rich tracts occupy residues 472 to 495 (PSSATFPDPLTSSLQGQLTESSAR), 502 to 518 (TPCTSTFPDQLLPSTAT), and 527 to 555 (THEQLTPPSTAFQAHLNSPSQTFPEQLSP). A disordered region spans residues 472 to 555 (PSSATFPDPL…SQTFPEQLSP (84 aa)). Residues 624–648 (YTEKEQNEIDRLIQQISQLAQGMDR) adopt a coiled-coil conformation.

As to quaternary structure, efficient DNA binding requires dimerization with another bHLH protein. Heterodimer; forms a heterodimer with ARNT, ARNT2 or BMAL1. In terms of processing, ubiquitinated, leading to degradation by the proteosome. In terms of tissue distribution, specifically expressed in neurons. Expressed in the lateral nucleus of the amygdala (at protein level).

It is found in the nucleus. Transcription factor expressed in neurons of the brain that regulates the excitatory-inhibitory balance within neural circuits and is required for contextual memory in the hippocampus. Plays a key role in the structural and functional plasticity of neurons. Acts as an early-response transcription factor in both excitatory and inhibitory neurons, where it induces distinct but overlapping sets of late-response genes in these two types of neurons, allowing the synapses that form on inhibitory and excitatory neurons to be modified by neuronal activity in a manner specific to their function within a circuit, thereby facilitating appropriate circuit responses to sensory experience. In excitatory neurons, activates transcription of BDNF, which in turn controls the number of GABA-releasing synapses that form on excitatory neurons, thereby promoting an increased number of inhibitory synapses on excitatory neurons. In inhibitory neurons, regulates a distinct set of target genes that serve to increase excitatory input onto somatostatin neurons, probably resulting in enhanced feedback inhibition within cortical circuits. The excitatory and inhibitory balance in neurons affects a number of processes, such as short-term and long-term memory, acquisition of experience, fear memory, response to stress and social behavior. Acts as a regulator of dendritic spine development in olfactory bulb granule cells in a sensory-experience-dependent manner by regulating expression of MDM2. Efficient DNA binding requires dimerization with another bHLH protein, such as ARNT, ARNT2 or BMAL1. Can activate the CME (CNS midline enhancer) element. The chain is Neuronal PAS domain-containing protein 4 from Rattus norvegicus (Rat).